We begin with the raw amino-acid sequence, 305 residues long: Protein MFI (305 aa).

In terms of assembly, can homodimerize. Interacts with MFF; the interaction inhibits MFF interaction with DNM1L.

It is found in the cytoplasm. The protein localises to the cytosol. The protein resides in the mitochondrion outer membrane. Its function is as follows. Acts as an inhibitor of mitochondrial fission. Interacts with MFF and prevents DNM1L recruitment to mitochondria, promoting a more fused mitochondrial network. This chain is Protein MFI, found in Rattus norvegicus (Rat).